Here is a 163-residue protein sequence, read N- to C-terminus: Crossover junction endodeoxyribonuclease RuvC (163 aa).

Catalysis depends on residues D7, E67, and D140. 3 residues coordinate Mg(2+): D7, E67, and D140.

This sequence belongs to the RuvC family. Homodimer which binds Holliday junction (HJ) DNA. The HJ becomes 2-fold symmetrical on binding to RuvC with unstacked arms; it has a different conformation from HJ DNA in complex with RuvA. In the full resolvosome a probable DNA-RuvA(4)-RuvB(12)-RuvC(2) complex forms which resolves the HJ. It depends on Mg(2+) as a cofactor.

The protein localises to the cytoplasm. The enzyme catalyses Endonucleolytic cleavage at a junction such as a reciprocal single-stranded crossover between two homologous DNA duplexes (Holliday junction).. The RuvA-RuvB-RuvC complex processes Holliday junction (HJ) DNA during genetic recombination and DNA repair. Endonuclease that resolves HJ intermediates. Cleaves cruciform DNA by making single-stranded nicks across the HJ at symmetrical positions within the homologous arms, yielding a 5'-phosphate and a 3'-hydroxyl group; requires a central core of homology in the junction. The consensus cleavage sequence is 5'-(A/T)TT(C/G)-3'. Cleavage occurs on the 3'-side of the TT dinucleotide at the point of strand exchange. HJ branch migration catalyzed by RuvA-RuvB allows RuvC to scan DNA until it finds its consensus sequence, where it cleaves and resolves the cruciform DNA. The sequence is that of Crossover junction endodeoxyribonuclease RuvC from Desulforamulus reducens (strain ATCC BAA-1160 / DSM 100696 / MI-1) (Desulfotomaculum reducens).